The following is a 463-amino-acid chain: tRNA-2-methylthio-N(6)-dimethylallyladenosine synthase (463 aa).

The MTTase N-terminal domain maps to 5 to 125; it reads RKLHIKSYGC…LPQLLAKAEQ (121 aa). C14, C50, C88, C166, C170, and C173 together coordinate [4Fe-4S] cluster. Positions 152–384 constitute a Radical SAM core domain; that stretch reads RARGISAFVT…QQLIDQQQSA (233 aa). A TRAM domain is found at 387-449; the sequence is KAAIGRTVEV…RYSLLGELAS (63 aa).

It belongs to the methylthiotransferase family. MiaB subfamily. Monomer. [4Fe-4S] cluster serves as cofactor.

The protein resides in the cytoplasm. It catalyses the reaction N(6)-dimethylallyladenosine(37) in tRNA + (sulfur carrier)-SH + AH2 + 2 S-adenosyl-L-methionine = 2-methylsulfanyl-N(6)-dimethylallyladenosine(37) in tRNA + (sulfur carrier)-H + 5'-deoxyadenosine + L-methionine + A + S-adenosyl-L-homocysteine + 2 H(+). In terms of biological role, catalyzes the methylthiolation of N6-(dimethylallyl)adenosine (i(6)A), leading to the formation of 2-methylthio-N6-(dimethylallyl)adenosine (ms(2)i(6)A) at position 37 in tRNAs that read codons beginning with uridine. In Rhodopseudomonas palustris (strain TIE-1), this protein is tRNA-2-methylthio-N(6)-dimethylallyladenosine synthase.